We begin with the raw amino-acid sequence, 351 residues long: Photosystem II D2 protein (351 aa).

Residues 39–59 form a helical membrane-spanning segment; it reads CAYLALGGWLTGTTFVTSWYT. H116 provides a ligand contact to chlorophyll a. Residues 123 to 139 traverse the membrane as a helical segment; it reads GFMLRQFEIARLVGIRP. Residues Q128 and N141 each coordinate pheophytin a. The chain crosses the membrane as a helical span at residues 151 to 164; the sequence is VFVSVFLMYPLGQS. Chlorophyll a is bound at residue H196. Residues 206 to 226 traverse the membrane as a helical segment; it reads GALLCAIHGATVENTLFEDGE. The a plastoquinone site is built by H213 and F260. Residue H213 participates in Fe cation binding. Fe cation is bound at residue H267. A helical transmembrane segment spans residues 277–293; it reads GLWMSAIGIVGLALNLR.

This sequence belongs to the reaction center PufL/M/PsbA/D family. PSII is composed of 1 copy each of membrane proteins PsbA, PsbB, PsbC, PsbD, PsbE, PsbF, PsbH, PsbI, PsbJ, PsbK, PsbL, PsbM, PsbT, PsbX, PsbY, PsbZ, Psb30/Ycf12, peripheral proteins PsbO, CyanoQ (PsbQ), PsbU, PsbV and a large number of cofactors. It forms dimeric complexes. Requires The D1/D2 heterodimer binds P680, chlorophylls that are the primary electron donor of PSII, and subsequent electron acceptors. It shares a non-heme iron and each subunit binds pheophytin, quinone, additional chlorophylls, carotenoids and lipids. There is also a Cl(-1) ion associated with D1 and D2, which is required for oxygen evolution. The PSII complex binds additional chlorophylls, carotenoids and specific lipids. as cofactor.

The protein resides in the cellular thylakoid membrane. It carries out the reaction 2 a plastoquinone + 4 hnu + 2 H2O = 2 a plastoquinol + O2. Its function is as follows. Photosystem II (PSII) is a light-driven water:plastoquinone oxidoreductase that uses light energy to abstract electrons from H(2)O, generating O(2) and a proton gradient subsequently used for ATP formation. It consists of a core antenna complex that captures photons, and an electron transfer chain that converts photonic excitation into a charge separation. The D1/D2 (PsbA/PsbD) reaction center heterodimer binds P680, the primary electron donor of PSII as well as several subsequent electron acceptors. D2 is needed for assembly of a stable PSII complex. This chain is Photosystem II D2 protein, found in Crocosphaera subtropica (strain ATCC 51142 / BH68) (Cyanothece sp. (strain ATCC 51142)).